The primary structure comprises 561 residues: Dihydroxy-acid dehydratase (561 aa).

[2Fe-2S] cluster is bound at residue cysteine 50. Residue aspartate 82 coordinates Mg(2+). Position 123 (cysteine 123) interacts with [2Fe-2S] cluster. Mg(2+) is bound by residues aspartate 124 and lysine 125. Lysine 125 is subject to N6-carboxylysine. A [2Fe-2S] cluster-binding site is contributed by cysteine 195. Glutamate 447 is a Mg(2+) binding site. Serine 473 serves as the catalytic Proton acceptor.

It belongs to the IlvD/Edd family. As to quaternary structure, homodimer. [2Fe-2S] cluster serves as cofactor. It depends on Mg(2+) as a cofactor.

It carries out the reaction (2R)-2,3-dihydroxy-3-methylbutanoate = 3-methyl-2-oxobutanoate + H2O. The catalysed reaction is (2R,3R)-2,3-dihydroxy-3-methylpentanoate = (S)-3-methyl-2-oxopentanoate + H2O. It functions in the pathway amino-acid biosynthesis; L-isoleucine biosynthesis; L-isoleucine from 2-oxobutanoate: step 3/4. Its pathway is amino-acid biosynthesis; L-valine biosynthesis; L-valine from pyruvate: step 3/4. Functionally, functions in the biosynthesis of branched-chain amino acids. Catalyzes the dehydration of (2R,3R)-2,3-dihydroxy-3-methylpentanoate (2,3-dihydroxy-3-methylvalerate) into 2-oxo-3-methylpentanoate (2-oxo-3-methylvalerate) and of (2R)-2,3-dihydroxy-3-methylbutanoate (2,3-dihydroxyisovalerate) into 2-oxo-3-methylbutanoate (2-oxoisovalerate), the penultimate precursor to L-isoleucine and L-valine, respectively. In Synechocystis sp. (strain ATCC 27184 / PCC 6803 / Kazusa), this protein is Dihydroxy-acid dehydratase.